The following is a 1806-amino-acid chain: SH3 and multiple ankyrin repeat domains protein 3 (1806 aa).

An intramolecular interaction with the ANK repeats region spans residues 76–150 (MDGPGASAVV…KFLDEERLLQ (75 aa)). Tyrosine 197 is subject to Phosphotyrosine. ANK repeat units follow at residues 223–253 (SGEC…HLDF), 257–286 (DGLT…SPDY), 290–320 (RGLT…QLGI), 324–353 (NGWQ…DMGA), 357–386 (SGNT…NRDV), and 390–420 (NSQT…DVVP). Over residues 407–416 (AEVIKTHKDS) the composition is skewed to basic and acidic residues. Residues 407–467 (AEVIKTHKDS…AQPAASPGPS (61 aa)) are disordered. The span at 439–461 (LASPRPLQRSASDINLKGEAQPA) shows a compositional bias: pro residues. 5 positions are modified to phosphoserine: serine 448, serine 450, serine 463, serine 470, and serine 558. In terms of domain architecture, SH3 spans 546-605 (VPGRKFIAVKAHSPQGEGEIPLHRGEAVKVLSIGEGGFWEGTVKGRTGWFPADCVEEVQM). Tyrosine 631 carries the phosphotyrosine modification. The 95-residue stretch at 646 to 740 (VAVLQKRDHE…RLVMKVVSVT (95 aa)) folds into the PDZ domain. 2 disordered regions span residues 665-689 (KAET…ESVD) and 760-853 (PSTT…KGIP). Residues 753–760 (PPPPKRAP) are required for interaction with ABI1. At serine 770 the chain carries Phosphoserine. Over residues 813-845 (ATVKQRPTSRRITPAEISSLFERQGLPGPEKLP) the composition is skewed to pro residues. A phosphoserine mark is found at serine 857, serine 866, and serine 877. A disordered region spans residues 871–1021 (RFPRSTSMQD…FSASLFAPSK (151 aa)). Residues 906-915 (DSGPPPAFSP) are compositionally biased toward pro residues. Residues serine 966 and serine 973 each carry the phosphoserine modification. The residue at position 988 (threonine 988) is a Phosphothreonine. Over residues 993 to 1013 (PKRRPRPPGPDSPYANLGAFS) the composition is skewed to gly residues. Tyrosine 1006 carries the post-translational modification Phosphotyrosine. Arginine 1041 carries the post-translational modification Asymmetric dimethylarginine. Residues 1115 to 1124 (PGADLPSLQP) show a composition bias toward low complexity. Disordered regions lie at residues 1115–1460 (PGAD…MSTL), 1475–1525 (ADGH…HHAA), and 1546–1584 (SKLW…KDTR). Basic and acidic residues predominate over residues 1173–1193 (TGKPLDPSSPLALALAARERA). Residue threonine 1204 is modified to Phosphothreonine. Serine 1208, serine 1233, serine 1237, and serine 1240 each carry phosphoserine. A compositionally biased stretch (pro residues) spans 1251–1261 (EAEKVPREERK). Threonine 1309 carries the post-translational modification Phosphothreonine. Serine 1328 carries the post-translational modification Phosphoserine. Residues 1360 to 1370 (LPPAQLSSSDE) are compositionally biased toward basic and acidic residues. Low complexity-rich tracts occupy residues 1371-1392 (ETRE…ANGV) and 1444-1460 (HLET…MSTL). The SH3-binding signature appears at 1485–1491 (PPVPPKP). Serine 1495 bears the Phosphoserine mark. The span at 1495 to 1505 (SPLGKGPVTFR) shows a compositional bias: polar residues. Residues 1569–1589 (ISELSSRLQQLNKDTRSLGEE) are a coiled coil. 4 positions are modified to phosphoserine: serine 1585, serine 1596, serine 1604, and serine 1614. Residues 1627 to 1637 (PGGPGGGASYS) are compositionally biased toward low complexity. The segment at 1627–1664 (PGGPGGGASYSVRPSGRYPVARRAPSPVKPASLERVEG) is disordered. A compositionally biased stretch (pro residues) spans 1638–1657 (VRPSGRYPVARRAPSPVKPA). Phosphoserine occurs at positions 1709, 1711, and 1713. One can recognise an SAM domain in the interval 1743–1806 (WSKFDVGDWL…ERALRQLDGS (64 aa)).

May homomultimerize via its SAM domain. Interacts with BAIAP2, DBNL and SLC17A7/VGLUT1. Interacts with DLGAP1/GKAP, GRM1/MGLUR1, GRM5/MGLUR5 and LZTS3 C-termini via its PDZ domain. Interacts with ABI1, HOMER1, HOMER2, HOMER3 and CTTN/cortactin SH3 domain. Is part of a complex with DLG4/PSD-95 and DLGAP1/GKAP. Interacts (via PDZ domain) with the GRIA1 subunit of the AMPA receptor (via PDZ-binding motif). Interacts with WASF1 and CYFIP2; the interactions mediate the association of SHANK3 with the WAVE1 complex. Interacts with ARPC2; the interaction probably mediates the association of SHANK3 with the Arp2/3 complex. Interacts (via ANK repeats) with SHARPIN and SPTAN1. Interacts (via PDZ domain) with ARHGAP44 (probably via PDZ-binding motif); the interaction takes place in dendritic spines and promotes GRIA1 exocytosis. Interacts with CAMK2A. Interacts with DIP2A. Interacts with ADGRL3. As to expression, expressed in the cerebral cortex and the cerebellum.

It localises to the cytoplasm. The protein resides in the postsynaptic density. Its subcellular location is the cell projection. The protein localises to the dendritic spine. Its function is as follows. Major scaffold postsynaptic density protein which interacts with multiple proteins and complexes to orchestrate the dendritic spine and synapse formation, maturation and maintenance. Interconnects receptors of the postsynaptic membrane including NMDA-type and metabotropic glutamate receptors via complexes with GKAP/PSD-95 and HOMER, respectively, and the actin-based cytoskeleton. Plays a role in the structural and functional organization of the dendritic spine and synaptic junction through the interaction with Arp2/3 and WAVE1 complex as well as the promotion of the F-actin clusters. By way of this control of actin dynamics, participates in the regulation of developing neurons growth cone motility and the NMDA receptor-signaling. Also modulates GRIA1 exocytosis and GRM5/MGLUR5 expression and signaling to control the AMPA and metabotropic glutamate receptor-mediated synaptic transmission and plasticity. May be required at an early stage of synapse formation and be inhibited by IGF1 to promote synapse maturation. The protein is SH3 and multiple ankyrin repeat domains protein 3 (SHANK3) of Homo sapiens (Human).